The sequence spans 172 residues: Adenine phosphoribosyltransferase (172 aa).

This sequence belongs to the purine/pyrimidine phosphoribosyltransferase family. As to quaternary structure, homodimer.

The protein localises to the cytoplasm. The catalysed reaction is AMP + diphosphate = 5-phospho-alpha-D-ribose 1-diphosphate + adenine. Its pathway is purine metabolism; AMP biosynthesis via salvage pathway; AMP from adenine: step 1/1. Its function is as follows. Catalyzes a salvage reaction resulting in the formation of AMP, that is energically less costly than de novo synthesis. The polypeptide is Adenine phosphoribosyltransferase (Methanococcus maripaludis (strain C5 / ATCC BAA-1333)).